Here is a 343-residue protein sequence, read N- to C-terminus: MPLDGVKNIVLVLSGKGGVGKSSVTLQLALTFCLQGRSVGILDVDLTGPSIPRLVGLEDAKITQAPGGWLPVTVHPFHTPSSDGLNGSQRANKPDDSNESSSSTVETAPQSTNFCGSLRCMSLGFLLRDRGDAVIWRGPKKTAMIRQFLTDVLWGETDYLLIDTPPGTSDEHIALAEQLLTIQQTYSLRSSRATAPKLAGAVLVTTPQAISTSDVRKEINFCVKTRIPVLGVIENMSGYTCPCCGEVSNVFSRGGGQIMAQETGVRFLGAVPIDVGFGEMVEGWKKDSTGQDQGNKATKKGQDARLDSYDDLLVERYKKCWSFSVFEEFAKKLIGLIEGSDQQ.

15–22 (GKGGVGKS) contacts ATP. Polar residues-rich tracts occupy residues 80-91 (PSSDGLNGSQRA) and 99-110 (ESSSSTVETAPQ). The interval 80–110 (PSSDGLNGSQRANKPDDSNESSSSTVETAPQ) is disordered. Residues Cys-241 and Cys-244 each contribute to the [4Fe-4S] cluster site.

Belongs to the Mrp/NBP35 ATP-binding proteins family. NUBP2/CFD1 subfamily. As to quaternary structure, heterotetramer of 2 NBP35 and 2 CFD1 chains. It depends on [4Fe-4S] cluster as a cofactor.

Its subcellular location is the cytoplasm. Functionally, component of the cytosolic iron-sulfur (Fe/S) protein assembly (CIA) machinery. Required for maturation of extramitochondrial Fe-S proteins. The NBP35-CFD1 heterotetramer forms a Fe-S scaffold complex, mediating the de novo assembly of an Fe-S cluster and its transfer to target apoproteins. This chain is Cytosolic Fe-S cluster assembly factor CFD1, found in Coccidioides immitis (strain RS) (Valley fever fungus).